Here is a 167-residue protein sequence, read N- to C-terminus: Adenylylsulfate reductase subunit beta (167 aa).

4Fe-4S ferredoxin-type domains lie at 1 to 35 and 38 to 67; these read MPTFVDPSKCDGCKGGEKTACMYICPNDLMILDPE and KAFNQEPEACWECYSCIKICPQGAITARPY. C10, C13, C21, C25, C47, C50, C53, and C57 together coordinate [4Fe-4S] cluster.

As to quaternary structure, heterodimer composed of AprA and AprB. The heterodimers can dimerize to form heterotetramers. Requires [4Fe-4S] cluster as cofactor.

It localises to the cytoplasm. Iron-sulfur cluster subunit of the adenylylsulfate reductase which catalyzes reversibly the reduction of adenosine 5'-phosphosulfate (APS) to sulfite and AMP during dissimilatory sulfate reduction. The iron-sulfur cluster 2 is thought to accept electrons from a still unknown electron donor and transfer electrons to the iron-sulfur cluster 1 of this protein and then onto the FAD of AprA. In Megalodesulfovibrio gigas (strain ATCC 19364 / DSM 1382 / NCIMB 9332 / VKM B-1759) (Desulfovibrio gigas), this protein is Adenylylsulfate reductase subunit beta.